The sequence spans 320 residues: MARTKIALIGAGNIGGTLAHLAASKELGDVVLFDVVEGVPQGKALDLSQCGPVEGFDAKLKGTNDYADIAGADVIIVTAGVARKPGMSRDDLLGINLKVMKSVGEGIKANAPDAFVICITNPLDAMVWALREFSGLPHNKVVGMAGVLDSARFATFLAEEFNVSVQDVTTFVLGGHGDTMVPVVEYSTVAGIPIPDLIKMGWSTQERIDAIVQRTRSGGGEIVALLKTGSAFYAPATSAIAMAESYLKDKKRVLPCAAYLSGEYGVDDLYVGVPVIIGANGVEKIVEINLSDSAKANLQVSVDAVKELLVACKGIDSSLA.

NAD(+) is bound by residues 10-15 (GAGNIG) and D34. 2 residues coordinate substrate: R83 and R89. Residues N96 and 119–121 (ITN) contribute to the NAD(+) site. Residues N121 and R152 each contribute to the substrate site. H176 functions as the Proton acceptor in the catalytic mechanism.

It belongs to the LDH/MDH superfamily. MDH type 3 family.

It catalyses the reaction (S)-malate + NAD(+) = oxaloacetate + NADH + H(+). Catalyzes the reversible oxidation of malate to oxaloacetate. This is Malate dehydrogenase from Rhizorhabdus wittichii (strain DSM 6014 / CCUG 31198 / JCM 15750 / NBRC 105917 / EY 4224 / RW1) (Sphingomonas wittichii).